Consider the following 1216-residue polypeptide: ATP-dependent helicase/nuclease subunit A (1216 aa).

In terms of domain architecture, UvrD-like helicase ATP-binding spans 26–488; that stretch reads QKKTAEQIEA…ILLKANFRSS (463 aa). 47 to 54 serves as a coordination point for ATP; sequence ASAGSGKT. Residues 515 to 802 enclose the UvrD-like helicase C-terminal domain; it reads KHQLVFANTK…ELMTIHKSKG (288 aa).

The protein belongs to the helicase family. AddA subfamily. As to quaternary structure, heterodimer of AddA and AddB/RexB. Requires Mg(2+) as cofactor.

It carries out the reaction Couples ATP hydrolysis with the unwinding of duplex DNA by translocating in the 3'-5' direction.. The enzyme catalyses ATP + H2O = ADP + phosphate + H(+). The heterodimer acts as both an ATP-dependent DNA helicase and an ATP-dependent, dual-direction single-stranded exonuclease. Recognizes the chi site generating a DNA molecule suitable for the initiation of homologous recombination. The AddA nuclease domain is required for chi fragment generation; this subunit has the helicase and 3' -&gt; 5' nuclease activities. The sequence is that of ATP-dependent helicase/nuclease subunit A from Streptococcus pneumoniae (strain ATCC 700669 / Spain 23F-1).